Consider the following 337-residue polypeptide: 2-oxoglutarate receptor 1 (337 aa).

Topologically, residues 1–37 are extracellular; that stretch reads MIETLDSPANDSDFLDYITALENCTDEQISFKMQYLP. N23 carries an N-linked (GlcNAc...) asparagine glycan. The chain crosses the membrane as a helical span at residues 38-58; that stretch reads VIYSIIFLVGFPGNTVAISIY. The Cytoplasmic segment spans residues 59 to 69; the sequence is VFKMRPWKSST. Residues 70–90 traverse the membrane as a helical segment; sequence IIMLNLALTDLLYLTSLPFLI. At 91–116 the chain is on the extracellular side; it reads HYYASGENWIFGDFMCKFIRFGFHFN. The cysteines at positions 106 and 183 are disulfide-linked. The chain crosses the membrane as a helical span at residues 117–137; it reads LYSSILFLTCFSLFRYIVIIH. Residues 138–151 lie on the Cytoplasmic side of the membrane; sequence PMSCFSIQKTRWAV. A helical membrane pass occupies residues 152 to 172; it reads VACAGVWVISLVAVMPMTFLI. The Extracellular portion of the chain corresponds to 173-200; that stretch reads TSTTRTNRSACLDLTSSDDLTTIKWYNL. A helical transmembrane segment spans residues 201-221; the sequence is ILTATTFCLPLLIVTLCYTTI. The Cytoplasmic segment spans residues 222–242; the sequence is ISTLTHGPRTHSCFKQKARRL. Residues 243–263 traverse the membrane as a helical segment; sequence TILLLLVFYVCFLPFHILRVI. The Extracellular segment spans residues 264–284; the sequence is RIESRLLSISCSIESHIHEAY. The helical transmembrane segment at 285-305 threads the bilayer; the sequence is IVSRPLAALNTFGNLLLYVVV. Topologically, residues 306–337 are cytoplasmic; the sequence is SNNFQQAFCSAVRCKAIGDLEQAKKDSCSNNP.

Belongs to the G-protein coupled receptor 1 family. As to expression, highly expressed in mast cells and is found predominantly in the tissues of the respiratory tract and kidneys.

The protein localises to the cell membrane. Functionally, g protein-coupled receptor for dicarboxylates and amino dicarboxylates. Receptor for itaconate, a metabolite produced by myeloid lineages. In the respiratory epithelium, couples the binding of itaconate to the activation of GNA11 and downstream intracellular Ca(2+) release, leading to mucocilliary clearance of airborne pathogens. Receptor for leukotriene E4 (LTE4) produced by mast cells upon allergic inflammation. Binds with high affinity to LTE4 and elicits mucin release from pulmonary epithelium in response to airborne fungi allergens. Regulates mucin-producing goblet cell homeostasis. Receptor for alpha-ketoglutarate produced by proximal tubule renal cells upon metabolic alkalosis. In an intrarenal paracrine signaling pathway, binds alpha-ketoglutarate and drives transepithelial salt reabsorption and bicarbonate secretion by SLC26A4/pendrin-positive intercalated cells. The protein is 2-oxoglutarate receptor 1 (Oxgr1) of Rattus norvegicus (Rat).